Here is a 757-residue protein sequence, read N- to C-terminus: Protein hunchback (757 aa).

2 disordered regions span residues 30-51 and 171-213; these read EPGH…PIPS and EKLQ…EDMK. A compositionally biased stretch (polar residues) spans 39–51; the sequence is SVASSPRQSPIPS. Residues 197–213 show a composition bias toward basic and acidic residues; that stretch reads EPEKEHDQMSNSSEDMK. 4 consecutive C2H2-type zinc fingers follow at residues 239–261, 268–290, 296–318, and 324–348; these read YKCK…TRTH, LQCP…IRKH, FQCD…RKSH, and YRCA…KYGH. Disordered regions lie at residues 367-416, 511-535, and 602-694; these read DVYG…VATS, EQLQ…YERK, and MTSP…APPS. Composition is skewed to low complexity over residues 397–414 and 512–521; these read VAAV…QPVA and QLQQQNQQQS. A compositionally biased stretch (acidic residues) spans 522 to 531; sequence DNEEEDQDDE. The segment covering 651 to 694 has biased composition (low complexity); it reads ANTSASSTASSSGNSSNASSNSNGNSSSNSSSNGTTSAVAAPPS. 2 consecutive C2H2-type zinc fingers follow at residues 704–726 and 732–756; these read YECK…MGYH and FKCN…RNAH.

The protein belongs to the hunchback C2H2-type zinc-finger protein family.

It localises to the nucleus. In terms of biological role, gap class segmentation protein that controls development of head structures. The polypeptide is Protein hunchback (hb) (Drosophila sechellia (Fruit fly)).